The chain runs to 806 residues: ATP-dependent RNA helicase DBP7 (806 aa).

The segment at 24 to 135 (KGGRWRDRLK…AEPAKASNAP (112 aa)) is disordered. The segment covering 46-56 (PSSTPPRNRTT) has biased composition (polar residues). A compositionally biased stretch (basic and acidic residues) spans 69–78 (PRTEDGESHR). The span at 100 to 113 (GQISSSLFTSNPSA) shows a compositional bias: polar residues. The Q motif motif lies at 141-170 (ENFHSLGVSRRVAQHLATKLEMKAPTAIQK). In terms of domain architecture, Helicase ATP-binding spans 174–380 (PQLINGDSDA…EISLEDAIHI (207 aa)). Residue 187-194 (AETGSGKT) coordinates ATP. The DEAD box motif lies at 309–312 (DEGD). Residues 413-611 (RLVTLIALLK…GLASVVNLPS (199 aa)) enclose the Helicase C-terminal domain. Disordered regions lie at residues 642-677 (PAGA…YKPK) and 741-784 (TAAN…VDED). The span at 755-768 (SGGGGGGGRVGFGR) shows a compositional bias: gly residues.

The protein belongs to the DEAD box helicase family. DDX31/DBP7 subfamily.

It localises to the nucleus. Its subcellular location is the nucleolus. The enzyme catalyses ATP + H2O = ADP + phosphate + H(+). Functionally, ATP-binding RNA helicase involved in the biogenesis of 60S ribosomal subunits and is required for the normal formation of 25S and 5.8S rRNAs. The polypeptide is ATP-dependent RNA helicase DBP7 (DBP7) (Chaetomium globosum (strain ATCC 6205 / CBS 148.51 / DSM 1962 / NBRC 6347 / NRRL 1970) (Soil fungus)).